Here is a 377-residue protein sequence, read N- to C-terminus: Nucleosome assembly protein 1;2 (377 aa).

Residues 26–80 (VNVLKNKLHDLTGKHSNVTESLSPNVRKRVEALREIQTEHDELEAKFFEERAALE) are a coiled coil. Positions 47–62 (LSPNVRKRVEALREIQ) match the Nuclear export signal motif. The short motif at 223–228 (KKKPKK) is the Nuclear localization signal element. Positions 298–377 (EAAEDDYAEL…GERPPECKQQ (80 aa)) are disordered. Residues 299–342 (AAEDDYAELEDDEDEDDDEEDDEDEDEEEEDEEDDEDEEEDEDE) show a composition bias toward acidic residues. Cysteine methyl ester is present on cysteine 374. A lipid anchor (S-farnesyl cysteine) is attached at cysteine 374. The propeptide at 375–377 (KQQ) is removed in mature form.

It belongs to the nucleosome assembly protein (NAP) family. As to quaternary structure, binds preferentially histone H1 in vitro. Interacts with CYCB1;1.

The protein localises to the nucleus. It is found in the cytoplasm. May modulate chromatin structure by regulation of nucleosome assembly/disassembly. Could function together with B-type cyclins in the regulation of microtubule dynamics. The polypeptide is Nucleosome assembly protein 1;2 (NAP1;2) (Nicotiana tabacum (Common tobacco)).